A 396-amino-acid polypeptide reads, in one-letter code: Tryptophan synthase beta chain (396 aa).

Position 88 is an N6-(pyridoxal phosphate)lysine (lysine 88).

Belongs to the TrpB family. Tetramer of two alpha and two beta chains. Requires pyridoxal 5'-phosphate as cofactor.

The enzyme catalyses (1S,2R)-1-C-(indol-3-yl)glycerol 3-phosphate + L-serine = D-glyceraldehyde 3-phosphate + L-tryptophan + H2O. The protein operates within amino-acid biosynthesis; L-tryptophan biosynthesis; L-tryptophan from chorismate: step 5/5. In terms of biological role, the beta subunit is responsible for the synthesis of L-tryptophan from indole and L-serine. This is Tryptophan synthase beta chain from Shewanella baltica (strain OS155 / ATCC BAA-1091).